Here is a 172-residue protein sequence, read N- to C-terminus: MNQDHPEFDSEDLAQNPPETDPLKAEIESLRSEIALVKADALRERADLENQRKRIARDVENARKFANEKLLGELLPVFDSLDAGLTAAGTQPSPLRDGLDMTYKQLLKVAADNGLTLLDPVGQPFNPDQHQAISQGEAEGIAPGHVVQVFQKGYLLNDRLLRPALVVVAKQD.

A disordered region spans residues 1–24 (MNQDHPEFDSEDLAQNPPETDPLK).

This sequence belongs to the GrpE family. As to quaternary structure, homodimer.

The protein localises to the cytoplasm. Functionally, participates actively in the response to hyperosmotic and heat shock by preventing the aggregation of stress-denatured proteins, in association with DnaK and GrpE. It is the nucleotide exchange factor for DnaK and may function as a thermosensor. Unfolded proteins bind initially to DnaJ; upon interaction with the DnaJ-bound protein, DnaK hydrolyzes its bound ATP, resulting in the formation of a stable complex. GrpE releases ADP from DnaK; ATP binding to DnaK triggers the release of the substrate protein, thus completing the reaction cycle. Several rounds of ATP-dependent interactions between DnaJ, DnaK and GrpE are required for fully efficient folding. The protein is Protein GrpE of Xanthomonas oryzae pv. oryzae (strain PXO99A).